A 516-amino-acid polypeptide reads, in one-letter code: Bifunctional purine biosynthesis protein PurH (516 aa).

The region spanning 1–149 (MSERQPIRRA…KNHANVAVLT (149 aa)) is the MGS-like domain.

It belongs to the PurH family.

It carries out the reaction (6R)-10-formyltetrahydrofolate + 5-amino-1-(5-phospho-beta-D-ribosyl)imidazole-4-carboxamide = 5-formamido-1-(5-phospho-D-ribosyl)imidazole-4-carboxamide + (6S)-5,6,7,8-tetrahydrofolate. The enzyme catalyses IMP + H2O = 5-formamido-1-(5-phospho-D-ribosyl)imidazole-4-carboxamide. It functions in the pathway purine metabolism; IMP biosynthesis via de novo pathway; 5-formamido-1-(5-phospho-D-ribosyl)imidazole-4-carboxamide from 5-amino-1-(5-phospho-D-ribosyl)imidazole-4-carboxamide (10-formyl THF route): step 1/1. It participates in purine metabolism; IMP biosynthesis via de novo pathway; IMP from 5-formamido-1-(5-phospho-D-ribosyl)imidazole-4-carboxamide: step 1/1. This chain is Bifunctional purine biosynthesis protein PurH, found in Cutibacterium acnes (strain DSM 16379 / KPA171202) (Propionibacterium acnes).